The following is a 144-amino-acid chain: 3-dehydroquinate dehydratase (144 aa).

Tyrosine 22 functions as the Proton acceptor in the catalytic mechanism. Residues asparagine 73, histidine 79, and aspartate 86 each contribute to the substrate site. Histidine 99 functions as the Proton donor in the catalytic mechanism. Substrate contacts are provided by residues 100 to 101 (LS) and arginine 110.

This sequence belongs to the type-II 3-dehydroquinase family. In terms of assembly, homododecamer.

It carries out the reaction 3-dehydroquinate = 3-dehydroshikimate + H2O. It participates in metabolic intermediate biosynthesis; chorismate biosynthesis; chorismate from D-erythrose 4-phosphate and phosphoenolpyruvate: step 3/7. In terms of biological role, catalyzes a trans-dehydration via an enolate intermediate. The sequence is that of 3-dehydroquinate dehydratase from Geotalea daltonii (strain DSM 22248 / JCM 15807 / FRC-32) (Geobacter daltonii).